A 506-amino-acid polypeptide reads, in one-letter code: Histidine ammonia-lyase (506 aa).

Positions 143–145 (ASG) form a cross-link, 5-imidazolinone (Ala-Gly). 2,3-didehydroalanine (Ser) is present on S144.

This sequence belongs to the PAL/histidase family. Contains an active site 4-methylidene-imidazol-5-one (MIO), which is formed autocatalytically by cyclization and dehydration of residues Ala-Ser-Gly.

It is found in the cytoplasm. It catalyses the reaction L-histidine = trans-urocanate + NH4(+). It participates in amino-acid degradation; L-histidine degradation into L-glutamate; N-formimidoyl-L-glutamate from L-histidine: step 1/3. The chain is Histidine ammonia-lyase from Salmonella typhimurium (strain LT2 / SGSC1412 / ATCC 700720).